We begin with the raw amino-acid sequence, 360 residues long: NAD(P)H-quinone oxidoreductase subunit 1, chloroplastic (360 aa).

The next 8 membrane-spanning stretches (helical) occupy residues Trp-29–Val-49, Ile-96–Val-116, Ile-128–Met-148, Ala-166–Leu-186, Ile-204–Leu-224, Gly-255–Leu-277, Ile-297–Leu-317, and Leu-333–Ala-353.

This sequence belongs to the complex I subunit 1 family. NDH is composed of at least 16 different subunits, 5 of which are encoded in the nucleus.

The protein localises to the plastid. It localises to the chloroplast thylakoid membrane. It carries out the reaction a plastoquinone + NADH + (n+1) H(+)(in) = a plastoquinol + NAD(+) + n H(+)(out). The enzyme catalyses a plastoquinone + NADPH + (n+1) H(+)(in) = a plastoquinol + NADP(+) + n H(+)(out). Functionally, NDH shuttles electrons from NAD(P)H:plastoquinone, via FMN and iron-sulfur (Fe-S) centers, to quinones in the photosynthetic chain and possibly in a chloroplast respiratory chain. The immediate electron acceptor for the enzyme in this species is believed to be plastoquinone. Couples the redox reaction to proton translocation, and thus conserves the redox energy in a proton gradient. This is NAD(P)H-quinone oxidoreductase subunit 1, chloroplastic from Chlorokybus atmophyticus (Soil alga).